Consider the following 174-residue polypeptide: Crossover junction endodeoxyribonuclease RuvC (174 aa).

Catalysis depends on residues aspartate 8, glutamate 69, and aspartate 141. Positions 8, 69, and 141 each coordinate Mg(2+).

The protein belongs to the RuvC family. Homodimer which binds Holliday junction (HJ) DNA. The HJ becomes 2-fold symmetrical on binding to RuvC with unstacked arms; it has a different conformation from HJ DNA in complex with RuvA. In the full resolvosome a probable DNA-RuvA(4)-RuvB(12)-RuvC(2) complex forms which resolves the HJ. Mg(2+) serves as cofactor.

The protein localises to the cytoplasm. It carries out the reaction Endonucleolytic cleavage at a junction such as a reciprocal single-stranded crossover between two homologous DNA duplexes (Holliday junction).. In terms of biological role, the RuvA-RuvB-RuvC complex processes Holliday junction (HJ) DNA during genetic recombination and DNA repair. Endonuclease that resolves HJ intermediates. Cleaves cruciform DNA by making single-stranded nicks across the HJ at symmetrical positions within the homologous arms, yielding a 5'-phosphate and a 3'-hydroxyl group; requires a central core of homology in the junction. The consensus cleavage sequence is 5'-(A/T)TT(C/G)-3'. Cleavage occurs on the 3'-side of the TT dinucleotide at the point of strand exchange. HJ branch migration catalyzed by RuvA-RuvB allows RuvC to scan DNA until it finds its consensus sequence, where it cleaves and resolves the cruciform DNA. The polypeptide is Crossover junction endodeoxyribonuclease RuvC (Xanthomonas oryzae pv. oryzae (strain MAFF 311018)).